The primary structure comprises 137 residues: Small ribosomal subunit protein uS12 (137 aa).

The interval 33-57 (KVQTNVSSPQKRGVATRVGTMTPKK) is disordered. At Asp-102 the chain carries 3-methylthioaspartic acid.

Belongs to the universal ribosomal protein uS12 family. As to quaternary structure, part of the 30S ribosomal subunit. Contacts proteins S8 and S17. May interact with IF1 in the 30S initiation complex.

Functionally, with S4 and S5 plays an important role in translational accuracy. Interacts with and stabilizes bases of the 16S rRNA that are involved in tRNA selection in the A site and with the mRNA backbone. Located at the interface of the 30S and 50S subunits, it traverses the body of the 30S subunit contacting proteins on the other side and probably holding the rRNA structure together. The combined cluster of proteins S8, S12 and S17 appears to hold together the shoulder and platform of the 30S subunit. This is Small ribosomal subunit protein uS12 from Streptococcus thermophilus (strain CNRZ 1066).